We begin with the raw amino-acid sequence, 143 residues long: Large-conductance mechanosensitive channel (143 aa).

Transmembrane regions (helical) follow at residues 10-30 (FAVKGNVMDLAVGVIIGGAFS) and 89-109 (GSFITVAINFVILAFIIFLMV).

The protein belongs to the MscL family. Homopentamer.

Its subcellular location is the cell inner membrane. Channel that opens in response to stretch forces in the membrane lipid bilayer. May participate in the regulation of osmotic pressure changes within the cell. The protein is Large-conductance mechanosensitive channel of Burkholderia ambifaria (strain ATCC BAA-244 / DSM 16087 / CCUG 44356 / LMG 19182 / AMMD) (Burkholderia cepacia (strain AMMD)).